We begin with the raw amino-acid sequence, 863 residues long: DNA replication licensing factor MCM4 (863 aa).

Positions 1–10 (MSSPASTPSR) are enriched in low complexity. Disordered stretches follow at residues 1-60 (MSSP…VDLQ) and 91-126 (TYGTPSSRVEGTPRSGVRGTPVRQRPDLGSAQKGLQ). Ser-2 carries the post-translational modification N-acetylserine. Residue Ser-6 is modified to Phosphoserine; by CDC7. Residues Thr-7 and Thr-19 each carry the phosphothreonine modification. Phosphoserine occurs at positions 26, 31, 32, and 34. Thr-102 bears the Phosphothreonine mark. A Phosphoserine modification is found at Ser-105. Phosphothreonine is present on Thr-110. A phosphoserine mark is found at Ser-120, Ser-131, Ser-142, and Ser-145. An N6-acetyllysine modification is found at Lys-220. A Glycyl lysine isopeptide (Lys-Gly) (interchain with G-Cter in SUMO2) cross-link involves residue Lys-439. N6-acetyllysine is present on Lys-450. The 210-residue stretch at 458-667 (IYERLASALA…YDRRLAHHLV (210 aa)) folds into the MCM domain. 8 residues coordinate ATP: Tyr-471, Arg-497, Lys-516, Ser-517, Asn-618, Arg-643, Arg-732, and Glu-735. Positions 642 to 645 (SRFD) match the Arginine finger motif. Lys-798 participates in a covalent cross-link: Glycyl lysine isopeptide (Lys-Gly) (interchain with G-Cter in SUMO2). Lys-858 carries the post-translational modification N6-acetyllysine.

It belongs to the MCM family. As to quaternary structure, component of the MCM2-7 complex. The complex forms a toroidal hexameric ring with the proposed subunit order MCM2-MCM6-MCM4-MCM7-MCM3-MCM5. Component of the CMG helicase complex, a hexameric ring of related MCM2-7 subunits stabilized by CDC45 and the tetrameric GINS complex. Interacts with MCMBP. In terms of processing, sumoylated; SUMO2 modified in response to stress caused by inhibition of proteasome activity (in vitro).

The protein resides in the nucleus. It localises to the chromosome. It carries out the reaction ATP + H2O = ADP + phosphate + H(+). In terms of biological role, acts as a component of the MCM2-7 complex (MCM complex) which is the replicative helicase essential for 'once per cell cycle' DNA replication initiation and elongation in eukaryotic cells. Core component of CDC45-MCM-GINS (CMG) helicase, the molecular machine that unwinds template DNA during replication, and around which the replisome is built. The active ATPase sites in the MCM2-7 ring are formed through the interaction surfaces of two neighboring subunits such that a critical structure of a conserved arginine finger motif is provided in trans relative to the ATP-binding site of the Walker A box of the adjacent subunit. The six ATPase active sites, however, are likely to contribute differentially to the complex helicase activity. The sequence is that of DNA replication licensing factor MCM4 from Homo sapiens (Human).